Here is a 367-residue protein sequence, read N- to C-terminus: Germination protease (367 aa).

The propeptide occupies 1-15 (MKEPLDLSKYSIRTD).

The protein belongs to the peptidase A25 family. As to quaternary structure, homotetramer. In terms of processing, autoproteolytically processed. The inactive tetrameric zymogen termed p46 autoprocesses to a smaller form termed p41, which is active only during spore germination.

It catalyses the reaction Endopeptidase action with P4 Glu or Asp, P1 preferably Glu &gt; Asp, P1' hydrophobic and P2' Ala.. In terms of biological role, initiates the rapid degradation of small, acid-soluble proteins during spore germination. This Bacillus cereus (strain B4264) protein is Germination protease.